Here is a 1079-residue protein sequence, read N- to C-terminus: DNA ligase 4 (1079 aa).

A disordered region spans residues 1–20; sequence MAVHAPYNHAPPPTQEINGQ. The ATP site is built by Glu295, Lys297, Leu298, Arg302, Glu357, Phe395, Glu460, Lys465, Lys482, and Lys484. Catalysis depends on Lys297, which acts as the N6-AMP-lysine intermediate. Glu357 serves as a coordination point for Mg(2+). Glu460 serves as a coordination point for Mg(2+). The BRCT 1 domain maps to 699 to 789; sequence VETSIFSDMT…TALPFLKEFL (91 aa). Positions 838-847 are enriched in acidic residues; the sequence is DGEDKDEIDV. The segment at 838–942 is disordered; sequence DGEDKDEIDV…SDVGVNGDDY (105 aa). Composition is skewed to basic and acidic residues over residues 848-878 and 900-914; these read EESRESKNRRMAREDLKEKESNRTLEQKKLQ and MSLKEESDTDSERSR. A BRCT 2 domain is found at 968 to 1078; sequence DEDRIFYHLA…TLLDEDLYKP (111 aa).

This sequence belongs to the ATP-dependent DNA ligase family. The cofactor is Mg(2+).

It localises to the nucleus. The enzyme catalyses ATP + (deoxyribonucleotide)n-3'-hydroxyl + 5'-phospho-(deoxyribonucleotide)m = (deoxyribonucleotide)n+m + AMP + diphosphate.. DNA ligase involved in DNA non-homologous end joining (NHEJ); required for double-strand break (DSB) repair. The protein is DNA ligase 4 (LIG4) of Cryptococcus neoformans var. neoformans serotype D (strain JEC21 / ATCC MYA-565) (Filobasidiella neoformans).